A 1216-amino-acid chain; its full sequence is DNA-directed RNA polymerase subunit beta (1216 aa).

Positions 1185 to 1216 (EEKQELPSQEYESLNLDQELKTASENVSESEF) are disordered. Over residues 1190-1216 (LPSQEYESLNLDQELKTASENVSESEF) the composition is skewed to polar residues.

It belongs to the RNA polymerase beta chain family. As to quaternary structure, the RNAP catalytic core consists of 2 alpha, 1 beta, 1 beta' and 1 omega subunit. When a sigma factor is associated with the core the holoenzyme is formed, which can initiate transcription.

It catalyses the reaction RNA(n) + a ribonucleoside 5'-triphosphate = RNA(n+1) + diphosphate. Functionally, DNA-dependent RNA polymerase catalyzes the transcription of DNA into RNA using the four ribonucleoside triphosphates as substrates. The protein is DNA-directed RNA polymerase subunit beta of Mycoplasmopsis pulmonis (strain UAB CTIP) (Mycoplasma pulmonis).